Consider the following 47-residue polypeptide: Large ribosomal subunit protein bL34 (47 aa).

Basic residues-rich tracts occupy residues 1–22 (MAKG…HGFR) and 36–47 (ARRRKGRKSLTA). The interval 1 to 47 (MAKGKRTFQPNNRRRSRVHGFRSRMSTRAGRAIVSARRRKGRKSLTA) is disordered.

The protein belongs to the bacterial ribosomal protein bL34 family.

This Corynebacterium kroppenstedtii (strain DSM 44385 / JCM 11950 / CIP 105744 / CCUG 35717) protein is Large ribosomal subunit protein bL34.